The primary structure comprises 617 residues: 1-deoxy-D-xylulose-5-phosphate synthase (617 aa).

Thiamine diphosphate is bound by residues His76 and 117 to 119; that span reads GHS. Asp148 provides a ligand contact to Mg(2+). Residues 149–150, Asn177, Tyr285, and Glu366 each bind thiamine diphosphate; that span reads GA. Position 177 (Asn177) interacts with Mg(2+).

This sequence belongs to the transketolase family. DXPS subfamily. Homodimer. The cofactor is Mg(2+). Thiamine diphosphate serves as cofactor.

It carries out the reaction D-glyceraldehyde 3-phosphate + pyruvate + H(+) = 1-deoxy-D-xylulose 5-phosphate + CO2. It participates in metabolic intermediate biosynthesis; 1-deoxy-D-xylulose 5-phosphate biosynthesis; 1-deoxy-D-xylulose 5-phosphate from D-glyceraldehyde 3-phosphate and pyruvate: step 1/1. Functionally, catalyzes the acyloin condensation reaction between C atoms 2 and 3 of pyruvate and glyceraldehyde 3-phosphate to yield 1-deoxy-D-xylulose-5-phosphate (DXP). In Mannheimia succiniciproducens (strain KCTC 0769BP / MBEL55E), this protein is 1-deoxy-D-xylulose-5-phosphate synthase.